A 256-amino-acid polypeptide reads, in one-letter code: Imidazole glycerol phosphate synthase subunit HisF (256 aa).

Active-site residues include D12 and D131.

This sequence belongs to the HisA/HisF family. As to quaternary structure, heterodimer of HisH and HisF.

It is found in the cytoplasm. The enzyme catalyses 5-[(5-phospho-1-deoxy-D-ribulos-1-ylimino)methylamino]-1-(5-phospho-beta-D-ribosyl)imidazole-4-carboxamide + L-glutamine = D-erythro-1-(imidazol-4-yl)glycerol 3-phosphate + 5-amino-1-(5-phospho-beta-D-ribosyl)imidazole-4-carboxamide + L-glutamate + H(+). It participates in amino-acid biosynthesis; L-histidine biosynthesis; L-histidine from 5-phospho-alpha-D-ribose 1-diphosphate: step 5/9. In terms of biological role, IGPS catalyzes the conversion of PRFAR and glutamine to IGP, AICAR and glutamate. The HisF subunit catalyzes the cyclization activity that produces IGP and AICAR from PRFAR using the ammonia provided by the HisH subunit. This chain is Imidazole glycerol phosphate synthase subunit HisF, found in Pseudomonas syringae pv. tomato (strain ATCC BAA-871 / DC3000).